The chain runs to 442 residues: tRNA modification GTPase MnmE (442 aa).

Residues Arg-21, Glu-79, and Lys-118 each coordinate (6S)-5-formyl-5,6,7,8-tetrahydrofolate. Residues Gly-214 to Asn-367 form the TrmE-type G domain. Asn-224 serves as a coordination point for K(+). GTP is bound by residues Asn-224–Ser-229, Ser-243–Thr-249, and Asp-268–Gly-271. Ser-228 provides a ligand contact to Mg(2+). K(+) contacts are provided by Ser-243, Ile-245, and Thr-248. Thr-249 contacts Mg(2+). Lys-442 lines the (6S)-5-formyl-5,6,7,8-tetrahydrofolate pocket.

The protein belongs to the TRAFAC class TrmE-Era-EngA-EngB-Septin-like GTPase superfamily. TrmE GTPase family. Homodimer. Heterotetramer of two MnmE and two MnmG subunits. Requires K(+) as cofactor.

It localises to the cytoplasm. Exhibits a very high intrinsic GTPase hydrolysis rate. Involved in the addition of a carboxymethylaminomethyl (cmnm) group at the wobble position (U34) of certain tRNAs, forming tRNA-cmnm(5)s(2)U34. The sequence is that of tRNA modification GTPase MnmE from Campylobacter jejuni subsp. doylei (strain ATCC BAA-1458 / RM4099 / 269.97).